Consider the following 252-residue polypeptide: Methionine aminopeptidase (252 aa).

His76 lines the substrate pocket. Residues Asp93, Asp104, and His168 each contribute to the a divalent metal cation site. His175 lines the substrate pocket. The a divalent metal cation site is built by Glu202 and Glu233.

It belongs to the peptidase M24A family. Methionine aminopeptidase type 1 subfamily. Monomer. It depends on Co(2+) as a cofactor. Zn(2+) is required as a cofactor. Mn(2+) serves as cofactor. Requires Fe(2+) as cofactor.

It catalyses the reaction Release of N-terminal amino acids, preferentially methionine, from peptides and arylamides.. Functionally, removes the N-terminal methionine from nascent proteins. The N-terminal methionine is often cleaved when the second residue in the primary sequence is small and uncharged (Met-Ala-, Cys, Gly, Pro, Ser, Thr, or Val). Requires deformylation of the N(alpha)-formylated initiator methionine before it can be hydrolyzed. In Staphylococcus aureus (strain MRSA252), this protein is Methionine aminopeptidase.